We begin with the raw amino-acid sequence, 335 residues long: Nucleoid-associated protein Ent638_2782 (335 aa).

The protein belongs to the YejK family.

Its subcellular location is the cytoplasm. It localises to the nucleoid. The protein is Nucleoid-associated protein Ent638_2782 of Enterobacter sp. (strain 638).